The sequence spans 946 residues: Inter-alpha-trypsin inhibitor heavy chain H2 (946 aa).

The N-terminal stretch at Met1–Ala18 is a signal peptide. A propeptide spanning residues Phe19 to Arg54 is cleaved from the precursor. One can recognise a VIT domain in the interval Leu56–Glu185. Phosphoserine is present on Ser60. Asn118 and Asn263 each carry an N-linked (GlcNAc...) asparagine glycan. A 4-carboxyglutamate mark is found at Glu282 and Glu283. One can recognise a VWFA domain in the interval Pro308–Glu468. Asn445 is a glycosylation site (N-linked (GlcNAc...) asparagine). Ser466 is modified (phosphoserine). Asp702 carries the post-translational modification Aspartate 1-(chondroitin 4-sulfate)-ester. Positions Pro703 to Pro946 are excised as a propeptide. Ser886 is subject to Phosphoserine.

The protein belongs to the ITIH family. As to quaternary structure, I-alpha-I plasma protease inhibitors are assembled from one or two heavy chains (HC) and one light chain, bikunin. Inter-alpha-inhibitor (I-alpha-I) is composed of ITIH1/HC1, ITIH2/HC2 and bikunin. In terms of processing, heavy chains are linked to bikunin via chondroitin 4-sulfate esterified to the alpha-carboxyl of the C-terminal aspartate after propeptide cleavage. Post-translationally, phosphorylated by FAM20C in the extracellular medium. In terms of tissue distribution, expressed in both liver and brain.

The protein resides in the secreted. Functionally, may act as a carrier of hyaluronan in serum or as a binding protein between hyaluronan and other matrix protein, including those on cell surfaces in tissues to regulate the localization, synthesis and degradation of hyaluronan which are essential to cells undergoing biological processes. The protein is Inter-alpha-trypsin inhibitor heavy chain H2 (Itih2) of Mus musculus (Mouse).